The primary structure comprises 154 residues: 6,7-dimethyl-8-ribityllumazine synthase (154 aa).

Residues phenylalanine 21, 55-57 (AFE), and 79-81 (CVI) contribute to the 5-amino-6-(D-ribitylamino)uracil site. 84–85 (AT) contributes to the (2S)-2-hydroxy-3-oxobutyl phosphate binding site. Histidine 87 (proton donor) is an active-site residue. Phenylalanine 112 contacts 5-amino-6-(D-ribitylamino)uracil. Arginine 126 contacts (2S)-2-hydroxy-3-oxobutyl phosphate.

The protein belongs to the DMRL synthase family. As to quaternary structure, forms an icosahedral capsid composed of 60 subunits, arranged as a dodecamer of pentamers.

The catalysed reaction is (2S)-2-hydroxy-3-oxobutyl phosphate + 5-amino-6-(D-ribitylamino)uracil = 6,7-dimethyl-8-(1-D-ribityl)lumazine + phosphate + 2 H2O + H(+). It participates in cofactor biosynthesis; riboflavin biosynthesis; riboflavin from 2-hydroxy-3-oxobutyl phosphate and 5-amino-6-(D-ribitylamino)uracil: step 1/2. Catalyzes the formation of 6,7-dimethyl-8-ribityllumazine by condensation of 5-amino-6-(D-ribitylamino)uracil with 3,4-dihydroxy-2-butanone 4-phosphate. This is the penultimate step in the biosynthesis of riboflavin. This chain is 6,7-dimethyl-8-ribityllumazine synthase, found in Staphylococcus aureus (strain MRSA252).